A 502-amino-acid polypeptide reads, in one-letter code: UPF0371 protein CLB_0371 (502 aa).

This sequence belongs to the UPF0371 family.

In Clostridium botulinum (strain ATCC 19397 / Type A), this protein is UPF0371 protein CLB_0371.